Consider the following 446-residue polypeptide: Protein odr-4 homolog (446 aa).

2 helical membrane passes run 81–101 and 424–444; these read MLPGGLLVLSVFIIATPELSK and MGVVIAVAVAVFASIFSFNYF.

The protein belongs to the ODR-4 family.

The protein resides in the membrane. Functionally, may play a role in the trafficking of a subset of G-protein coupled receptors. This chain is Protein odr-4 homolog (ODR4), found in Gallus gallus (Chicken).